The following is a 294-amino-acid chain: Elongation factor Ts (294 aa).

Residues 80–83 (TDFV) are involved in Mg(2+) ion dislocation from EF-Tu.

It belongs to the EF-Ts family.

The protein localises to the cytoplasm. Functionally, associates with the EF-Tu.GDP complex and induces the exchange of GDP to GTP. It remains bound to the aminoacyl-tRNA.EF-Tu.GTP complex up to the GTP hydrolysis stage on the ribosome. This chain is Elongation factor Ts, found in Listeria innocua serovar 6a (strain ATCC BAA-680 / CLIP 11262).